A 362-amino-acid chain; its full sequence is Oryzain gamma chain (362 aa).

Residues 1-24 (MAHRRIILLLAAAAVAATSAVAAA) form the signal peptide. Residues 25–144 (SSGFDDSNPI…GNHRMRDAAA (120 aa)) constitute a propeptide, activation peptide. The N-linked (GlcNAc...) asparagine glycan is linked to Asn-128. 2 cysteine pairs are disulfide-bonded: Cys-166–Cys-209 and Cys-200–Cys-242. Cys-169 is a catalytic residue. Asn-258 carries N-linked (GlcNAc...) asparagine glycosylation. A disulfide bond links Cys-300 and Cys-350. Active-site residues include His-309 and Asn-329.

The protein belongs to the peptidase C1 family. As to expression, expressed only in seeds.

In Oryza sativa subsp. japonica (Rice), this protein is Oryzain gamma chain.